The sequence spans 397 residues: UPF0761 membrane protein Kkor_1635 (397 aa).

6 helical membrane passes run 36 to 56 (MLAL…FPSF), 92 to 112 (NLSA…MRSI), 132 to 152 (ILAY…SLAA), 168 to 188 (ILTF…LYMV), 201 to 221 (IAAV…AIFV), and 237 to 257 (IPIF…GVIV).

The protein belongs to the UPF0761 family.

The protein localises to the cell inner membrane. This Kangiella koreensis (strain DSM 16069 / JCM 12317 / KCTC 12182 / SW-125) protein is UPF0761 membrane protein Kkor_1635.